The primary structure comprises 498 residues: Cobyric acid synthase (498 aa).

The GATase cobBQ-type domain maps to 257-447 (DLEIAVLRLP…LHGLLDNGPW (191 aa)). C338 serves as the catalytic Nucleophile. H439 is an active-site residue.

Belongs to the CobB/CobQ family. CobQ subfamily.

It functions in the pathway cofactor biosynthesis; adenosylcobalamin biosynthesis. Functionally, catalyzes amidations at positions B, D, E, and G on adenosylcobyrinic A,C-diamide. NH(2) groups are provided by glutamine, and one molecule of ATP is hydrogenolyzed for each amidation. This Synechococcus sp. (strain CC9605) protein is Cobyric acid synthase.